The sequence spans 587 residues: Inorganic phosphate transporter 2-1, chloroplastic (587 aa).

Residues 1–71 (MTLPYRFSSV…VCPLASFSSY (71 aa)) constitute a chloroplast transit peptide. A disordered region spans residues 74-106 (SEGEEQHHADQPIQNPHESSTVSNESDGKGNAE). Residues 85 to 98 (PIQNPHESSTVSNE) show a composition bias toward polar residues. A run of 12 helical transmembrane segments spans residues 127–147 (AISIVIAFSALTLPIFMKSLG), 154–174 (TKLLSYATLLFGFYMAWNIGA), 195–215 (AVMTAAVLEFSGALLMGTHVT), 233–253 (MLLFAGLLSSLAAAGTWLQVA), 265–285 (CIVGSMVGFGLVYGGAGAVFW), 289–309 (AKVASSWVISPILGALVSFLV), 327–347 (AAAAAPVAVFVGVASISSAAL), 352–372 (IFPIALSQALACGVAGAIVFD), 413–433 (LEIVYGIFGYMQVLSACFMSF), 465–485 (IVIPMDVLAWGGFGIVAGLTM), 523–543 (LGLPISATHTLVGAVMGVGFA), and 559–579 (ASWLVTIPVGATLAVIYTWIF).

The protein belongs to the inorganic phosphate transporter (PiT) (TC 2.A.20.2) family. Mostly expressed in young green tissues. Present in both auto- and heterotrophic tissues. Also expressed in root stele.

Its subcellular location is the plastid. It is found in the chloroplast inner membrane. Low affinity H(+)/Pi chloroplastic cotransporter. Involved in inorganic phosphate (orthophosphate, Pi) uptake in green parts of plants in Pi-sufficient conditions. Required for Pi retranslocation during Pi deprivation. The sequence is that of Inorganic phosphate transporter 2-1, chloroplastic (PHT2-1) from Arabidopsis thaliana (Mouse-ear cress).